Consider the following 243-residue polypeptide: HTH-type transcriptional regulator MlrA (243 aa).

Residues 3–72 (LYTIGEVALL…VSKVKMLLSN (70 aa)) form the HTH merR-type domain. Positions 6–25 (IGEVALLCDINPVTLRAWQR) form a DNA-binding region, H-T-H motif.

As to quaternary structure, interacts with DgcM and PdeR.

Its activity is regulated as follows. Activity is regulated by DgcM and PdeR. Its function is as follows. Activates transcription of csgD, the master regulator of biofilm formation, by binding to its promoter region. Also controls the transcription of cadC and ibaG. Part of a signaling cascade that regulates curli biosynthesis. The cascade is composed of two c-di-GMP control modules, in which c-di-GMP controlled by the DgcE/PdeH pair (module I) regulates the activity of the DgcM/PdeR pair (module II), which in turn regulates activity of the transcription factor MlrA. The sequence is that of HTH-type transcriptional regulator MlrA from Escherichia coli (strain K12).